Consider the following 66-residue polypeptide: uncharacterized protein (66 aa).

One can recognise an HTH cro/C1-type domain in the interval 5–59 (LKYYRALHNLTQEDLAKKLGVSRQTIIAIEKGKYDPSLKLAFKIAKFFGVKIEDI). A DNA-binding region (H-T-H motif) is located at residues 16–35 (QEDLAKKLGVSRQTIIAIEK).

This is an uncharacterized protein from Methanocaldococcus jannaschii (strain ATCC 43067 / DSM 2661 / JAL-1 / JCM 10045 / NBRC 100440) (Methanococcus jannaschii).